Here is a 186-residue protein sequence, read N- to C-terminus: Elongation factor P (186 aa).

The protein belongs to the elongation factor P family.

It is found in the cytoplasm. The protein operates within protein biosynthesis; polypeptide chain elongation. Functionally, involved in peptide bond synthesis. Stimulates efficient translation and peptide-bond synthesis on native or reconstituted 70S ribosomes in vitro. Probably functions indirectly by altering the affinity of the ribosome for aminoacyl-tRNA, thus increasing their reactivity as acceptors for peptidyl transferase. This Cupriavidus necator (strain ATCC 17699 / DSM 428 / KCTC 22496 / NCIMB 10442 / H16 / Stanier 337) (Ralstonia eutropha) protein is Elongation factor P.